An 848-amino-acid polypeptide reads, in one-letter code: MYLYIETLKQRLDAINQLRVDRALAAMGPAFQQVYSLLPTLLHYHHPLMPGYLDGNVPSGICFYTPDETQRHYLNELELYRGMTPQDPPKGELPITGVYTMGSTSSVGQSCSSDLDIWVCHQSWLDGEERQLLQRKCSLLESWAASLGVEVSFFLIDENRFRHNESGSLGGEDCGSTQHILLLDEFYRTAVRLAGKRILWSMVPCDEEEHYDDYVMTLYAQGVLTPNEWLDLGGLSSLSAEEYFGASLWQLYKSIDSPYKAVLKTLLLEAYSWEYPNPRLLAKDIKQRLHDGEIVSFGLDPYCMMLERVTEYLTAIEDPTRLDLVRRCFYLKVCEKLSRERACVGWRREVLSQLVSEWGWDDARLTMLDNRANWKIDQVREAHNELLDAMMQSYRNLIRFARRNNLSVSASPQDIGVLTRKLYAAFEALPGKVTLVNPQISPDLSEPNLTFIHVPPGRANRSGWYLYNRAPNMDSIISHQPLEYNRYLNKLVAWAWFNGLLTSRTHLFIKGNGIVDLPKLQEMVADVSHHFPLRLPAPTPKALYSPCEIRHLAIIVNLEYDPTAAFRNKVVHFDFRKLDVFSFGEEQNCLIGSIDLLYRNSWNEVRTLHFNGEQAMIEALKTILGKMHQDAAPPDSVEVFCYSQHLRGLIRTRVQQLVSECIELRLSSTRQETGRFKALRVSGQTWGLFFERLNVSVQKLENAIEFYGAISHNKLHGLSVQVETNQVKLPSVVDGFASEGIIQFFFEETGDEKGFNIYILDESNRAEVYHHCEGSKEELVRDVSRFYSSSHDRFTYGSSFINFNLPQFYQIVKTDGRAQVIPFRTQPINTVPPANQDHDAPLLQQYFS.

The interval 1 to 535 (MYLYIETLKQ…DVSHHFPLRL (535 aa)) is catalytic. Positions 541–848 (KALYSPCEIR…DAPLLQQYFS (308 aa)) are regulatory. His-609 bears the Phosphohistidine; by CRR mark.

It belongs to the adenylyl cyclase class-1 family.

It localises to the cytoplasm. The catalysed reaction is ATP = 3',5'-cyclic AMP + diphosphate. The protein is Adenylate cyclase (cyaA) of Salmonella typhi.